The primary structure comprises 330 residues: DNA primase small subunit PriS (330 aa).

Active-site residues include Asp-101 and Asp-103. 4 residues coordinate Zn(2+): Cys-116, Cys-119, Cys-128, and Asp-131. Asp-235 is a catalytic residue.

Belongs to the eukaryotic-type primase small subunit family. As to quaternary structure, heterodimer of a small subunit (PriS) and a large subunit (PriL). Mg(2+) serves as cofactor. The cofactor is Mn(2+).

Catalytic subunit of DNA primase, an RNA polymerase that catalyzes the synthesis of short RNA molecules used as primers for DNA polymerase during DNA replication. The small subunit contains the primase catalytic core and has DNA synthesis activity on its own. Binding to the large subunit stabilizes and modulates the activity, increasing the rate of DNA synthesis while decreasing the length of the DNA fragments, and conferring RNA synthesis capability. The DNA polymerase activity may enable DNA primase to also catalyze primer extension after primer synthesis. May also play a role in DNA repair. Possesses a template-independent 3'-terminal nucleotidyl transferase activity. This chain is DNA primase small subunit PriS, found in Saccharolobus solfataricus (strain ATCC 35092 / DSM 1617 / JCM 11322 / P2) (Sulfolobus solfataricus).